Reading from the N-terminus, the 161-residue chain is Small ribosomal subunit protein bS6 (161 aa).

Residues 107–161 (KGDERERGFRGPKPAGRFESGRGGAGGARRGYDDREEFRARNEREDGRDTDGEAE) are disordered. Positions 136–161 (RGYDDREEFRARNEREDGRDTDGEAE) are enriched in basic and acidic residues.

This sequence belongs to the bacterial ribosomal protein bS6 family.

In terms of biological role, binds together with bS18 to 16S ribosomal RNA. This Gluconacetobacter diazotrophicus (strain ATCC 49037 / DSM 5601 / CCUG 37298 / CIP 103539 / LMG 7603 / PAl5) protein is Small ribosomal subunit protein bS6.